Here is a 225-residue protein sequence, read N- to C-terminus: Shikimate kinase (225 aa).

27–32 (GAGKTT) is an ATP binding site. A Mg(2+)-binding site is contributed by threonine 31. Substrate-binding residues include aspartate 49, arginine 73, and glycine 95. ATP is bound at residue arginine 132. Arginine 150 serves as a coordination point for substrate. A disordered region spans residues 186 to 225 (GGSEPDEAADAAGGSEPDEAADAAGGSEPDEAADAAGGKR).

This sequence belongs to the shikimate kinase family. As to quaternary structure, monomer. Mg(2+) is required as a cofactor.

The protein resides in the cytoplasm. The catalysed reaction is shikimate + ATP = 3-phosphoshikimate + ADP + H(+). The protein operates within metabolic intermediate biosynthesis; chorismate biosynthesis; chorismate from D-erythrose 4-phosphate and phosphoenolpyruvate: step 5/7. Catalyzes the specific phosphorylation of the 3-hydroxyl group of shikimic acid using ATP as a cosubstrate. This is Shikimate kinase from Frankia casuarinae (strain DSM 45818 / CECT 9043 / HFP020203 / CcI3).